The chain runs to 466 residues: Gastric inhibitory polypeptide receptor (466 aa).

A signal peptide spans 1–21 (MTTSPILQLLLRLSLCGLLLQ). The Extracellular portion of the chain corresponds to 22–138 (RAETGSKGQT…DQRLILERLQ (117 aa)). 3 cysteine pairs are disulfide-bonded: C46–C70, C61–C103, and C84–C118. Residues N62 and N77 are each glycosylated (N-linked (GlcNAc...) asparagine). A helical transmembrane segment spans residues 139–161 (VMYTVGYSLSLATLLLALLILSL). Residues 162-169 (FRRLHCTR) are Cytoplasmic-facing. The helical transmembrane segment at 170-189 (NYIHINLFTSFMLRAAAILS) threads the bilayer. Residues 190 to 217 (RDRLLPRPGPYLGDQALALWNQALAACR) are Extracellular-facing. A helical membrane pass occupies residues 218–242 (TAQIVTQYCVGANYTWLLVEGVYLH). The Cytoplasmic portion of the chain corresponds to 243 to 254 (SLLVLVGGSEEG). The chain crosses the membrane as a helical span at residues 255–278 (HFRYYLLLGWGAPALFVIPWVIVR). Topologically, residues 279-293 (YLYENTQCWERNEVK) are extracellular. A helical transmembrane segment spans residues 294 to 319 (AIWWIIRTPILMTILINFLIFIRILG). At 320-341 (ILLSKLRTRQMRCRDYRLRLAR) the chain is on the cytoplasmic side. The chain crosses the membrane as a helical span at residues 342–362 (STLTLVPLLGVHEVVFAPVTE). At 363–377 (EQARGALRFAKLGFE) the chain is on the extracellular side. Residues 378–398 (IFLSSFQGFLVSVLYCFINKE) traverse the membrane as a helical segment. The Cytoplasmic portion of the chain corresponds to 399–466 (VQSEIRRGWH…EASRELESYC (68 aa)). Positions 427-466 (AFRALPSGSGPGEVPTSRGLSSGTLPGPGNEASRELESYC) are disordered.

It belongs to the G-protein coupled receptor 2 family. As to quaternary structure, may form homodimers and heterodimers with GLP1R. N-glycosylation is required for cell surface expression and lengthens receptor half-life by preventing degradation in the ER.

Its subcellular location is the cell membrane. This is a receptor for GIP. The activity of this receptor is mediated by G proteins which activate adenylyl cyclase. This chain is Gastric inhibitory polypeptide receptor (GIPR), found in Homo sapiens (Human).